The primary structure comprises 211 residues: MTFDRRRASELQRKLSELVKEEDCFDPEAVEAVGGLDVSYKGDVGVSALSLIDYKTLRPLKHYYVVARVPIPYVPGFLAFREAPLHLTLIKKVKGYDLLLVDGHGRTHPRGLGIASHVGVTSGVPTVGVAKRRLVGEEERCGERECLVHEGKVVAYVIRRGKQKLYVSVGHCVSLETAYQIVKRLTVRRLPEPIAWADRISRSLARSLQLP.

Mg(2+) is bound by residues Asp-37 and Asp-102.

The protein belongs to the endonuclease V family. It depends on Mg(2+) as a cofactor.

The protein localises to the cytoplasm. It catalyses the reaction Endonucleolytic cleavage at apurinic or apyrimidinic sites to products with a 5'-phosphate.. Its function is as follows. DNA repair enzyme involved in the repair of deaminated bases. Selectively cleaves double-stranded DNA at the second phosphodiester bond 3' to a deoxyinosine leaving behind the intact lesion on the nicked DNA. This chain is Endonuclease V, found in Ignicoccus hospitalis (strain KIN4/I / DSM 18386 / JCM 14125).